The following is a 548-amino-acid chain: Probable malate:quinone oxidoreductase (548 aa).

Residues 521 to 548 (DKPQAADSTPKPQLKPQPVQKEVADIAL) are disordered. Over residues 530 to 541 (PKPQLKPQPVQK) the composition is skewed to low complexity.

This sequence belongs to the MQO family. FAD is required as a cofactor.

The enzyme catalyses (S)-malate + a quinone = a quinol + oxaloacetate. It participates in carbohydrate metabolism; tricarboxylic acid cycle; oxaloacetate from (S)-malate (quinone route): step 1/1. This chain is Probable malate:quinone oxidoreductase, found in Escherichia coli O17:K52:H18 (strain UMN026 / ExPEC).